The primary structure comprises 85 residues: Small ribosomal subunit protein bS16 (85 aa).

Belongs to the bacterial ribosomal protein bS16 family.

The chain is Small ribosomal subunit protein bS16 from Nitrosomonas eutropha (strain DSM 101675 / C91 / Nm57).